Reading from the N-terminus, the 64-residue chain is Large ribosomal subunit protein bL35 (64 aa).

It belongs to the bacterial ribosomal protein bL35 family.

The chain is Large ribosomal subunit protein bL35 from Vibrio atlanticus (strain LGP32) (Vibrio splendidus (strain Mel32)).